Consider the following 110-residue polypeptide: Protein RnfH (110 aa).

The tract at residues 90 to 110 is disordered; it reads VDKTRREGSIEGRKWLPKDSR.

The protein belongs to the UPF0125 (RnfH) family.

This chain is Protein RnfH, found in Burkholderia mallei (strain NCTC 10229).